We begin with the raw amino-acid sequence, 464 residues long: L-cysteine:1D-myo-inositol 2-amino-2-deoxy-alpha-D-glucopyranoside ligase (464 aa).

Cys-67 lines the Zn(2+) pocket. Residues 67–70 (CGIT), Thr-82, and 105–107 (NVT) contribute to the L-cysteinyl-5'-AMP site. The 'HIGH' region motif lies at 69 to 79 (ITPYDATHLGH). Residues 207–212 (ERGGDP) carry the 'ERGGDP' region motif. Trp-247 contacts L-cysteinyl-5'-AMP. Zn(2+) is bound at residue Cys-251. 269 to 271 (GTD) is an L-cysteinyl-5'-AMP binding site. His-276 lines the Zn(2+) pocket. Val-303 lines the L-cysteinyl-5'-AMP pocket. Residues 309 to 313 (KMSKS) carry the 'KMSKS' region motif. The disordered stretch occupies residues 410–435 (AGGSAGAGPDPTHQGGPVRGSGGDVP).

Belongs to the class-I aminoacyl-tRNA synthetase family. MshC subfamily. In terms of assembly, monomer. It depends on Zn(2+) as a cofactor.

The catalysed reaction is 1D-myo-inositol 2-amino-2-deoxy-alpha-D-glucopyranoside + L-cysteine + ATP = 1D-myo-inositol 2-(L-cysteinylamino)-2-deoxy-alpha-D-glucopyranoside + AMP + diphosphate + H(+). Catalyzes the ATP-dependent condensation of GlcN-Ins and L-cysteine to form L-Cys-GlcN-Ins. This is L-cysteine:1D-myo-inositol 2-amino-2-deoxy-alpha-D-glucopyranoside ligase from Frankia casuarinae (strain DSM 45818 / CECT 9043 / HFP020203 / CcI3).